The sequence spans 188 residues: Type II secretion system protein H (188 aa).

A propeptide spans 1–10 (MKRSTRKQQG) (leader sequence). At Phe11 the chain carries N-methylphenylalanine. Residues 13–35 (LLEMMLVVLLAGIAAGMVVMAFP) form a helical membrane-spanning segment.

Belongs to the GSP H family. In terms of assembly, type II secretion is composed of four main components: the outer membrane complex, the inner membrane complex, the cytoplasmic secretion ATPase and the periplasm-spanning pseudopilus. Interacts with core component OutG. Cleaved by prepilin peptidase. In terms of processing, methylated by prepilin peptidase at the amino group of the N-terminal phenylalanine once the leader sequence is cleaved by prepilin peptidase.

The protein resides in the cell inner membrane. Functionally, component of the type II secretion system required for the energy-dependent secretion of extracellular factors such as proteases and toxins from the periplasm. Part of the pseudopilus tip complex that is critical for the recognition and binding of secretion substrates. This is Type II secretion system protein H (outH) from Pectobacterium carotovorum subsp. carotovorum (Erwinia carotovora subsp. carotovora).